We begin with the raw amino-acid sequence, 477 residues long: Aspartyl/glutamyl-tRNA(Asn/Gln) amidotransferase subunit B (477 aa).

This sequence belongs to the GatB/GatE family. GatB subfamily. Heterotrimer of A, B and C subunits.

It catalyses the reaction L-glutamyl-tRNA(Gln) + L-glutamine + ATP + H2O = L-glutaminyl-tRNA(Gln) + L-glutamate + ADP + phosphate + H(+). The catalysed reaction is L-aspartyl-tRNA(Asn) + L-glutamine + ATP + H2O = L-asparaginyl-tRNA(Asn) + L-glutamate + ADP + phosphate + 2 H(+). Allows the formation of correctly charged Asn-tRNA(Asn) or Gln-tRNA(Gln) through the transamidation of misacylated Asp-tRNA(Asn) or Glu-tRNA(Gln) in organisms which lack either or both of asparaginyl-tRNA or glutaminyl-tRNA synthetases. The reaction takes place in the presence of glutamine and ATP through an activated phospho-Asp-tRNA(Asn) or phospho-Glu-tRNA(Gln). This chain is Aspartyl/glutamyl-tRNA(Asn/Gln) amidotransferase subunit B, found in Ureaplasma urealyticum serovar 10 (strain ATCC 33699 / Western).